The primary structure comprises 426 residues: uncharacterized protein (426 aa).

The protein to M.leprae L518_C2_147 and M.tuberculosis Rv1524.

This is an uncharacterized protein from Mycobacterium tuberculosis (strain CDC 1551 / Oshkosh).